The following is a 451-amino-acid chain: Phosphoglucosamine mutase (451 aa).

The active-site Phosphoserine intermediate is Ser101. Positions 101, 243, 245, and 247 each coordinate Mg(2+). Ser101 carries the post-translational modification Phosphoserine.

The protein belongs to the phosphohexose mutase family. The cofactor is Mg(2+). Post-translationally, activated by phosphorylation.

The catalysed reaction is alpha-D-glucosamine 1-phosphate = D-glucosamine 6-phosphate. Functionally, catalyzes the conversion of glucosamine-6-phosphate to glucosamine-1-phosphate. This chain is Phosphoglucosamine mutase, found in Geobacter metallireducens (strain ATCC 53774 / DSM 7210 / GS-15).